The following is a 228-amino-acid chain: Phosphoribosylformylglycinamidine synthase subunit PurQ (228 aa).

The 223-residue stretch at Phe3 to Thr225 folds into the Glutamine amidotransferase type-1 domain. Cys86 (nucleophile) is an active-site residue. Residues His194 and Glu196 contribute to the active site.

As to quaternary structure, part of the FGAM synthase complex composed of 1 PurL, 1 PurQ and 2 PurS subunits.

It localises to the cytoplasm. It catalyses the reaction N(2)-formyl-N(1)-(5-phospho-beta-D-ribosyl)glycinamide + L-glutamine + ATP + H2O = 2-formamido-N(1)-(5-O-phospho-beta-D-ribosyl)acetamidine + L-glutamate + ADP + phosphate + H(+). The catalysed reaction is L-glutamine + H2O = L-glutamate + NH4(+). Its pathway is purine metabolism; IMP biosynthesis via de novo pathway; 5-amino-1-(5-phospho-D-ribosyl)imidazole from N(2)-formyl-N(1)-(5-phospho-D-ribosyl)glycinamide: step 1/2. Functionally, part of the phosphoribosylformylglycinamidine synthase complex involved in the purines biosynthetic pathway. Catalyzes the ATP-dependent conversion of formylglycinamide ribonucleotide (FGAR) and glutamine to yield formylglycinamidine ribonucleotide (FGAM) and glutamate. The FGAM synthase complex is composed of three subunits. PurQ produces an ammonia molecule by converting glutamine to glutamate. PurL transfers the ammonia molecule to FGAR to form FGAM in an ATP-dependent manner. PurS interacts with PurQ and PurL and is thought to assist in the transfer of the ammonia molecule from PurQ to PurL. The protein is Phosphoribosylformylglycinamidine synthase subunit PurQ of Latilactobacillus sakei subsp. sakei (strain 23K) (Lactobacillus sakei subsp. sakei).